Here is a 585-residue protein sequence, read N- to C-terminus: MSRGDSMLRFEIKDRDAAGRIGKLEVNGKKIETPAIMPVVNPKQLIVEPKELKRMGFDIIITNSYIIYKDKKLREKALEKGIHRLLDYDGIIEVDSGSFQLMRYGKVEVTNREIVEFQHKIGVDIGTFLDIPTPPDAPREKAEQDLKITLERAKEAESIKQIPMNATVQGSTYLDLRKLAARKLSEMNFEIHPIGAVVPLLESYRFKDVVDIVIASKMGLRPDRPVHLFGAGHPMVFALAVAMGVDLFDSASYALYAKDDRYLTPQGTKRLEELEYFSCSCPVCSKYTPQELREMPKEEREKLLALHNLWVIREEINRVKQAIKEGELWRLVDERARAHPKLYAAYKRLLEYYHYLEEYEPITKKSAFFKISEESLKWPIARRAKERAEKVKAKFPESIPHPIFGEIPKYLSLTYPFAQSESEEDFQIEKPTRENAILYIMAIAEYQFGEGAGEAFRDAEVEIAKTGMPRQVKKNGKRLATVRAEDGLLTLGIEGAKRLHELLPYPVMRVVVNKEAEPFARKGKDVFAKFVEFADPKIRPYDEVLIVNENDELLATGQALLSGREMVLFSSGRAVKTRRGVEEKK.

Residue Asp95 is the Nucleophile of the active site. Residues Asp130 and Ala196 each contribute to the substrate site. Residues Cys279, Cys281, and Cys284 each contribute to the Zn(2+) site. Residues 507–582 (VMRVVVNKEA…RAVKTRRGVE (76 aa)) form the PUA domain.

This sequence belongs to the archaeosine tRNA-ribosyltransferase family. Zn(2+) serves as cofactor.

The catalysed reaction is guanosine(15) in tRNA + 7-cyano-7-deazaguanine = 7-cyano-7-carbaguanosine(15) in tRNA + guanine. The protein operates within tRNA modification; archaeosine-tRNA biosynthesis. Its function is as follows. Exchanges the guanine residue with 7-cyano-7-deazaguanine (preQ0) at position 15 in the dihydrouridine loop (D-loop) of archaeal tRNAs. The polypeptide is tRNA-guanine(15) transglycosylase (Pyrococcus furiosus (strain ATCC 43587 / DSM 3638 / JCM 8422 / Vc1)).